The following is a 164-amino-acid chain: Putative deoxyuridine 5'-triphosphate nucleotidohydrolase (164 aa).

65–67 (RSG) provides a ligand contact to substrate. N6-acetyllysine; by host is present on Lys-71. Substrate contacts are provided by residues 79 to 82 (GVVD), Gly-90, and 138 to 139 (YG).

Belongs to the dUTPase family. Mg(2+) serves as cofactor.

The catalysed reaction is dUTP + H2O = dUMP + diphosphate + H(+). In terms of biological role, this enzyme is involved in nucleotide metabolism: it produces dUMP, the immediate precursor of thymidine nucleotides and it decreases the intracellular concentration of dUTP so that uracil cannot be incorporated into DNA. The chain is Putative deoxyuridine 5'-triphosphate nucleotidohydrolase from Dryophytes versicolor (chameleon treefrog).